Here is a 236-residue protein sequence, read N- to C-terminus: Thioredoxin-like 2-2, chloroplastic (236 aa).

Residues 1–82 (MAGVVRLTTT…LRRPKSQVVR (82 aa)) constitute a chloroplast transit peptide. The 138-residue stretch at 83-220 (VKVDENVAET…QLELGITLQT (138 aa)) folds into the Thioredoxin domain. Residues Cys-135 and Cys-138 each act as nucleophile in the active site. Cys-135 and Cys-138 are joined by a disulfide.

Belongs to the thioredoxin family.

It localises to the plastid. Its subcellular location is the chloroplast. Thiol-disulfide oxidoreductase that may participate in various redox reactions. Possesses insulin disulfide bonds reducing activity. This Arabidopsis thaliana (Mouse-ear cress) protein is Thioredoxin-like 2-2, chloroplastic.